The chain runs to 767 residues: Protein ROLLING AND ERECT LEAF 2 (767 aa).

3 disordered regions span residues 1–20 (MGCT…CKER), 78–187 (PALA…SEFF), and 201–309 (RELE…SSTV). Composition is skewed to pro residues over residues 81–90 (APTPTPPPPS) and 110–126 (APPP…PPPV). Residues 145 to 155 (SDSSVASPARS) are compositionally biased toward low complexity. The segment covering 201-210 (RELEEEEKAR) has biased composition (basic and acidic residues). A compositionally biased stretch (acidic residues) spans 221-232 (EDEVDDDDDERE). The segment covering 255 to 264 (TRSEEGEMGN) has biased composition (basic and acidic residues).

Highly expressed in young leaves and panicles. Expressed at low levels in roots.

The protein localises to the cell membrane. In terms of biological role, involved in the regulation of leaf shape formation. May function by coordinating the expression of genes associated with leaf and bulliform cell development. The polypeptide is Protein ROLLING AND ERECT LEAF 2 (Oryza sativa subsp. japonica (Rice)).